A 141-amino-acid chain; its full sequence is MAKKIMGYIKLQIEAGKATPAPPVGPALGQRGVNIMEFTKAFNEKTKDKMGFKVPVVITVFTDKSFTFVVKQPPASALLMHAAGLKGGSSNPLKNKVAKLTQAQLMEIVNRKIEDLNTDDKEAAAKTIAGSARSIGIEIVD.

Belongs to the universal ribosomal protein uL11 family. As to quaternary structure, part of the ribosomal stalk of the 50S ribosomal subunit. Interacts with L10 and the large rRNA to form the base of the stalk. L10 forms an elongated spine to which L12 dimers bind in a sequential fashion forming a multimeric L10(L12)X complex. One or more lysine residues are methylated.

Its function is as follows. Forms part of the ribosomal stalk which helps the ribosome interact with GTP-bound translation factors. The chain is Large ribosomal subunit protein uL11 from Sulfurimonas denitrificans (strain ATCC 33889 / DSM 1251) (Thiomicrospira denitrificans (strain ATCC 33889 / DSM 1251)).